Reading from the N-terminus, the 822-residue chain is Pentatricopeptide repeat-containing protein At2g41720 (822 aa).

The interval 1-28 (MATVTNFKLVTPPESSRADKPGATKASD) is disordered. 19 PPR repeats span residues 106–136 (ARKN…MKIQ), 142–176 (RNDI…SCKP), 177–211 (DAET…AIAP), 212–246 (SRST…GVGP), 247–281 (DLVT…KVRP), 282–316 (DTTT…RAEC), 319–353 (DVVT…GLKP), 354–388 (NIVS…GIIP), 389–423 (DVVS…RRKP), 424–458 (NVVT…GIKP), 459–493 (NVVS…GINL), 494–528 (NTAA…KVKA), 529–563 (DSVT…SIPL), 564–598 (TKEV…GCEP), 599–633 (DVIA…GIEP), 634–668 (DSIA…EIPF), 669–699 (TGAV…MDPY), 704–738 (SIGL…GVGI), and 739–773 (NLKT…GIQP).

Belongs to the PPR family. P subfamily.

In Arabidopsis thaliana (Mouse-ear cress), this protein is Pentatricopeptide repeat-containing protein At2g41720 (EMB2654).